Reading from the N-terminus, the 333-residue chain is MGDWGFLEKLLDQVQEHSTVVGKIWLTVLFIFRILILGLAGESVWGDEQSDFECNTAQPGCTNVCYDQAFPISHIRYWVLQFLFVSTPTLIYLGHVIYLSRREERLRQKEGELRALPSKDPHVERALAAIEHQMAKISVAEDGRLRIRGALMGTYVISVLCKSVLEAGFLYGQWRLYGWTMEPVFVCQRAPCPHVVDCYVSRPTEKTIFIIFMLVVGVISLVLNLLELVHLLCRCVSREIKARRDHDTRPAQGSASDPYPEQVFFYLPMGEGPSSPPCPTYNGLSSTEQNWANLTTEERLTSTRPPPFVNAAPQGGQKSSSRPNSSASKKQYV.

At 1 to 20 the chain is on the cytoplasmic side; it reads MGDWGFLEKLLDQVQEHSTV. Residues 21-40 traverse the membrane as a helical segment; sequence VGKIWLTVLFIFRILILGLA. The Extracellular portion of the chain corresponds to 41-76; it reads GESVWGDEQSDFECNTAQPGCTNVCYDQAFPISHIR. A helical membrane pass occupies residues 77 to 99; sequence YWVLQFLFVSTPTLIYLGHVIYL. Residues 100 to 148 lie on the Cytoplasmic side of the membrane; sequence SRREERLRQKEGELRALPSKDPHVERALAAIEHQMAKISVAEDGRLRIR. Residues 149-171 traverse the membrane as a helical segment; it reads GALMGTYVISVLCKSVLEAGFLY. Residues 172-208 lie on the Extracellular side of the membrane; the sequence is GQWRLYGWTMEPVFVCQRAPCPHVVDCYVSRPTEKTI. A helical membrane pass occupies residues 209–231; the sequence is FIIFMLVVGVISLVLNLLELVHL. Residues 232 to 333 lie on the Cytoplasmic side of the membrane; the sequence is LCRCVSREIK…NSSASKKQYV (102 aa). The tract at residues 292–333 is disordered; the sequence is ANLTTEERLTSTRPPPFVNAAPQGGQKSSSRPNSSASKKQYV. Residues 318-333 are compositionally biased toward low complexity; the sequence is KSSSRPNSSASKKQYV.

This sequence belongs to the connexin family. Alpha-type (group II) subfamily. A connexon is composed of a hexamer of connexins. Highly expressed in lung.

The protein localises to the cell membrane. The protein resides in the cell junction. It is found in the gap junction. Functionally, one gap junction consists of a cluster of closely packed pairs of transmembrane channels, the connexons, through which materials of low MW diffuse from one cell to a neighboring cell. The polypeptide is Gap junction alpha-4 protein (Gja4) (Rattus norvegicus (Rat)).